The primary structure comprises 251 residues: Imidazole glycerol phosphate synthase subunit HisF (251 aa).

Active-site residues include D12 and D131.

It belongs to the HisA/HisF family. Heterodimer of HisH and HisF.

It localises to the cytoplasm. The enzyme catalyses 5-[(5-phospho-1-deoxy-D-ribulos-1-ylimino)methylamino]-1-(5-phospho-beta-D-ribosyl)imidazole-4-carboxamide + L-glutamine = D-erythro-1-(imidazol-4-yl)glycerol 3-phosphate + 5-amino-1-(5-phospho-beta-D-ribosyl)imidazole-4-carboxamide + L-glutamate + H(+). Its pathway is amino-acid biosynthesis; L-histidine biosynthesis; L-histidine from 5-phospho-alpha-D-ribose 1-diphosphate: step 5/9. Its function is as follows. IGPS catalyzes the conversion of PRFAR and glutamine to IGP, AICAR and glutamate. The HisF subunit catalyzes the cyclization activity that produces IGP and AICAR from PRFAR using the ammonia provided by the HisH subunit. This Streptomyces avermitilis (strain ATCC 31267 / DSM 46492 / JCM 5070 / NBRC 14893 / NCIMB 12804 / NRRL 8165 / MA-4680) protein is Imidazole glycerol phosphate synthase subunit HisF.